The primary structure comprises 942 residues: tRNAse Z TRZ4, mitochondrial (942 aa).

The N-terminal 50 residues, 1–50 (MLTSSMPQNLSLFGFSPLKSSSFALILRPFSLYPPIFASSSPAPSRRPPR), are a transit peptide targeting the mitochondrion. The segment at 38 to 85 (ASSSPAPSRRPPRTAGYRRSGPSPPRRKWSSFEEQKRKGRSPMEKDKA) is disordered. The segment covering 67–85 (SSFEEQKRKGRSPMEKDKA) has biased composition (basic and acidic residues).

It belongs to the RNase Z family. In terms of assembly, homodimer. The cofactor is Zn(2+). Requires Ca(2+) as cofactor. Mn(2+) is required as a cofactor. It depends on Mg(2+) as a cofactor.

It localises to the mitochondrion. It carries out the reaction Endonucleolytic cleavage of RNA, removing extra 3' nucleotides from tRNA precursor, generating 3' termini of tRNAs. A 3'-hydroxy group is left at the tRNA terminus and a 5'-phosphoryl group is left at the trailer molecule.. Functionally, zinc phosphodiesterase, which displays tRNA 3'-processing endonuclease activity. Involved in tRNA maturation, by removing a 3'-trailer from precursor tRNA. Can process the mitochondrial tRNA-like structures (t-elements). In Arabidopsis thaliana (Mouse-ear cress), this protein is tRNAse Z TRZ4, mitochondrial.